The following is a 483-amino-acid chain: Altronate oxidoreductase (483 aa).

Residue 18–29 (IIQFGEGNFLRA) participates in NAD(+) binding.

This sequence belongs to the mannitol dehydrogenase family. UxaB subfamily.

It catalyses the reaction D-altronate + NAD(+) = keto-D-tagaturonate + NADH + H(+). The protein operates within carbohydrate metabolism; pentose and glucuronate interconversion. This chain is Altronate oxidoreductase, found in Klebsiella pneumoniae (strain 342).